A 238-amino-acid polypeptide reads, in one-letter code: Sugar fermentation stimulation protein homolog (238 aa).

It belongs to the SfsA family.

This chain is Sugar fermentation stimulation protein homolog, found in Histophilus somni (strain 129Pt) (Haemophilus somnus).